Consider the following 92-residue polypeptide: Small ribosomal subunit protein uS19 (92 aa).

Belongs to the universal ribosomal protein uS19 family.

Its function is as follows. Protein S19 forms a complex with S13 that binds strongly to the 16S ribosomal RNA. The polypeptide is Small ribosomal subunit protein uS19 (Allorhizobium ampelinum (strain ATCC BAA-846 / DSM 112012 / S4) (Agrobacterium vitis (strain S4))).